The sequence spans 279 residues: Putative hydro-lyase GDI0188/Gdia_2258 (279 aa).

This sequence belongs to the D-glutamate cyclase family.

This is Putative hydro-lyase GDI0188/Gdia_2258 from Gluconacetobacter diazotrophicus (strain ATCC 49037 / DSM 5601 / CCUG 37298 / CIP 103539 / LMG 7603 / PAl5).